The primary structure comprises 152 residues: Avidin (152 aa).

A signal peptide spans 1-24 (MVHATSPLLLLLLLSLALVAPGLS). One can recognise an Avidin-like domain in the interval 26-149 (RKCSLTGKWT…GINIFTRLRT (124 aa)). Cys-28 and Cys-107 form a disulfide bridge. N-linked (GlcNAc...) asparagine glycosylation occurs at Asn-41. Residue Tyr-57 coordinates biotin.

This sequence belongs to the avidin/streptavidin family. Homotetramer. N-linked glycan at Asn-41 consists of GlcNAc(beta1-2)Man(alpha1-3)[GlcNAc(beta1-4)][Man(alpha1-?)Man(alpha1-6)] Man(beta1-4)GlcNAc(beta1-4)GlcNAc. Synthesized in hen oviduct and concentrated in egg white (where it represents 0.05% of the total protein).

Its subcellular location is the secreted. The biological function of avidin is not known. Forms a strong non-covalent specific complex with biotin (one molecule of biotin per subunit of avidin). The polypeptide is Avidin (AVD) (Gallus gallus (Chicken)).